The following is a 167-amino-acid chain: Translationally-controlled tumor protein homolog (167 aa).

Positions 1–167 (MKLFTDIISN…WKDGLRETKI (167 aa)) constitute a TCTP domain.

It belongs to the TCTP family.

The protein resides in the cytoplasm. Its subcellular location is the cytoskeleton. Its function is as follows. Involved in protein synthesis. Involved in microtubule stabilization. This is Translationally-controlled tumor protein homolog from Mycosarcoma maydis (Corn smut fungus).